A 550-amino-acid polypeptide reads, in one-letter code: Chaperonin GroEL 1 (550 aa).

Residues 29-32 (TIGP), 86-90 (DGTTT), Gly413, 477-479 (NAA), and Asp493 contribute to the ATP site. Residues 524–550 (AVSDGDHGHSHGHGHSHGHSHPQGPGF) are disordered. A compositionally biased stretch (basic residues) spans 533 to 543 (SHGHGHSHGHS).

It belongs to the chaperonin (HSP60) family. In terms of assembly, forms a cylinder of 14 subunits composed of two heptameric rings stacked back-to-back. Interacts with the co-chaperonin GroES.

The protein localises to the cytoplasm. The catalysed reaction is ATP + H2O + a folded polypeptide = ADP + phosphate + an unfolded polypeptide.. Functionally, together with its co-chaperonin GroES, plays an essential role in assisting protein folding. The GroEL-GroES system forms a nano-cage that allows encapsulation of the non-native substrate proteins and provides a physical environment optimized to promote and accelerate protein folding. The sequence is that of Chaperonin GroEL 1 from Frankia alni (strain DSM 45986 / CECT 9034 / ACN14a).